The chain runs to 377 residues: dTDP-fucopyranose mutase (377 aa).

FAD is bound by residues Ser12, 31-32, Asn39, 58-59, Arg348, and 355-360; these read DD, HI, and LDMDVC.

This sequence belongs to the UDP-galactopyranose/dTDP-fucopyranose mutase family. It depends on FAD as a cofactor.

The enzyme catalyses dTDP-alpha-D-fucose = dTDP-alpha-D-fucofuranose. It participates in bacterial outer membrane biogenesis; LPS O-antigen biosynthesis. Inhibited by Cu(2+), while other divalent cations such as Ca(2+), Co(2+), Fe(2+) and Mg(2+) have no obvious effects on enzyme activity. Catalyzes the conversion of dTDP-alpha-D-fucopyranose to dTDP-alpha-D-fucofuranose. This is a step in the biosynthesis of D-fucofuranose, a component of E.coli O52 O antigen. The sequence is that of dTDP-fucopyranose mutase (fcf2) from Escherichia coli.